Here is a 555-residue protein sequence, read N- to C-terminus: Potassium-transporting ATPase potassium-binding subunit (555 aa).

The next 10 helical transmembrane spans lie at 2–22, 60–80, 130–150, 173–193, 246–266, 278–298, 374–394, 412–432, 483–503, and 525–545; these read IWVAVIITMLLFILVAKPTGI, QYALSLVLLNGFMIVVVYFIF, IGITFLMFAAPATTLALVMAF, VFLPIAFIAALVFVALGVPQT, MSNILQMMLMMLLPTALPFTY, ILFVSLFMVFLLGFITITTSE, AGFVNIIMYAIIAVFISGLMV, LIAVTILFHPLLILGFSALAL, LVMFLGRYFSLITMLAVAASL, and GIFIGTIVIVGALTFFPMLVL.

It belongs to the KdpA family. In terms of assembly, the system is composed of three essential subunits: KdpA, KdpB and KdpC.

The protein localises to the cell membrane. Its function is as follows. Part of the high-affinity ATP-driven potassium transport (or Kdp) system, which catalyzes the hydrolysis of ATP coupled with the electrogenic transport of potassium into the cytoplasm. This subunit binds the extracellular potassium ions and delivers the ions to the membrane domain of KdpB through an intramembrane tunnel. The chain is Potassium-transporting ATPase potassium-binding subunit from Bacillus cereus (strain G9842).